We begin with the raw amino-acid sequence, 907 residues long: Leucine-rich repeat-containing G-protein coupled receptor 5 (907 aa).

The first 21 residues, 1–21 (MDTSRVRMLLSLLALLQLVAA), serve as a signal peptide directing secretion. The Extracellular segment spans residues 22–561 (GSPPRPDTMP…EHLFGSWLIR (540 aa)). Positions 33–64 (GCPSYCHCELDGRMLLRVDCSDLGLSELPSNL) constitute an LRRNT domain. Intrachain disulfides connect Cys-34–Cys-40 and Cys-38–Cys-52. LRR repeat units follow at residues 44–64 (GRML…PSNL), 65–88 (SVFT…LLHR), 89–112 (LRFL…AFAG), 114–136 (HSLK…ALQN), 137–160 (LRSL…CFSG), 162–184 (HSLR…AFRS), 186–208 (SALQ…AFGN), 209–232 (LSSL…CFDG), 233–256 (LHSL…IKTL), 257–279 (SNLK…AFVG), 281–303 (PSLI…AFQH), 304–327 (LPEL…LTGT), 328–350 (ATLE…VCDQ), 351–375 (LPNL…GCQK), 377–396 (QKID…TFQQ), 397–420 (LFNL…AFST), and 422–444 (PSLI…GLHG). Residues Asn-63 and Asn-77 are each glycosylated (N-linked (GlcNAc...) asparagine). A glycan (N-linked (GlcNAc...) asparagine) is linked at Asn-208. A disulfide bridge connects residues Cys-348 and Cys-373. Cys-479 and Cys-541 form a disulfide bridge. The chain crosses the membrane as a helical span at residues 562 to 582 (IGVWTTAVLALSCNALVAFTV). The LRR 18 repeat unit spans residues 564–585 (VWTTAVLALSCNALVAFTVFRT). Residues 583–595 (FRTPLYISSIKLL) lie on the Cytoplasmic side of the membrane. The helical transmembrane segment at 596 to 616 (IGVIAVVDILMGVSSAILAVV) threads the bilayer. Residues 617–638 (DTFTFGSFAQHGAWWEGGIGCQ) lie on the Extracellular side of the membrane. Residues Cys-637 and Cys-712 are joined by a disulfide bond. The helical transmembrane segment at 639-659 (IVGFLSIFASESSVFLLTLAA) threads the bilayer. Topologically, residues 660–682 (LERGFSVKCSSKFEMKAPLSSLK) are cytoplasmic. Residues 683-703 (AIILLCVLLALTIATVPLLGG) form a helical membrane-spanning segment. Over 704-723 (SEYNASPLCLPLPFGEPSTT) the chain is Extracellular. A helical membrane pass occupies residues 724–744 (GYMVALVLLNSLCFLIMTIAY). Residues 745–775 (TRLYCSLEKGELENLWDCSMVKHTALLLFTN) are Cytoplasmic-facing. Residues 776–796 (CILYCPVAFLSFSSLLNLTFI) traverse the membrane as a helical segment. The Extracellular portion of the chain corresponds to 797–802 (SPEVIK). Residues 803 to 823 (FILLVIVPLPACLNPLLYIVF) form a helical membrane-spanning segment. At 824–907 (NPHFKEDMGS…LSSVAFVPCL (84 aa)) the chain is on the cytoplasmic side.

The protein belongs to the G-protein coupled receptor 1 family. Identified in a complex composed of RNF43, LGR5 and RSPO1. Also interacts with other R-spondin ligands, including RSPO2, RSPO3 and RSPO4.

The protein localises to the cell membrane. It localises to the golgi apparatus. The protein resides in the trans-Golgi network membrane. Receptor for R-spondins that potentiates the canonical Wnt signaling pathway and acts as a stem cell marker of the intestinal epithelium and the hair follicle. Upon binding to R-spondins (RSPO1, RSPO2, RSPO3 or RSPO4), associates with phosphorylated LRP6 and frizzled receptors that are activated by extracellular Wnt receptors, triggering the canonical Wnt signaling pathway to increase expression of target genes. In contrast to classical G-protein coupled receptors, does not activate heterotrimeric G-proteins to transduce the signal. Involved in the development and/or maintenance of the adult intestinal stem cells during postembryonic development. The protein is Leucine-rich repeat-containing G-protein coupled receptor 5 (Lgr5) of Rattus norvegicus (Rat).